The following is a 369-amino-acid chain: 3-dehydroquinate synthase (369 aa).

Residues 75–80 (DGEEHK), 109–113 (GVIGD), 133–134 (TT), Lys-146, Lys-155, and 173–176 (TLKT) contribute to the NAD(+) site. Glu-188, His-251, and His-268 together coordinate Zn(2+).

Belongs to the sugar phosphate cyclases superfamily. Dehydroquinate synthase family. The cofactor is Co(2+). Zn(2+) is required as a cofactor. NAD(+) serves as cofactor.

It is found in the cytoplasm. It catalyses the reaction 7-phospho-2-dehydro-3-deoxy-D-arabino-heptonate = 3-dehydroquinate + phosphate. It participates in metabolic intermediate biosynthesis; chorismate biosynthesis; chorismate from D-erythrose 4-phosphate and phosphoenolpyruvate: step 2/7. Functionally, catalyzes the conversion of 3-deoxy-D-arabino-heptulosonate 7-phosphate (DAHP) to dehydroquinate (DHQ). In Legionella pneumophila (strain Paris), this protein is 3-dehydroquinate synthase.